Reading from the N-terminus, the 389-residue chain is Putative glutamate--cysteine ligase 2 (389 aa).

Belongs to the glutamate--cysteine ligase type 2 family. YbdK subfamily.

It catalyses the reaction L-cysteine + L-glutamate + ATP = gamma-L-glutamyl-L-cysteine + ADP + phosphate + H(+). Its function is as follows. ATP-dependent carboxylate-amine ligase which exhibits weak glutamate--cysteine ligase activity. The sequence is that of Putative glutamate--cysteine ligase 2 from Rhodospirillum rubrum (strain ATCC 11170 / ATH 1.1.1 / DSM 467 / LMG 4362 / NCIMB 8255 / S1).